The sequence spans 1006 residues: Unconventional myosin-Id (1006 aa).

Residue Ala-2 is modified to N-acetylalanine. Positions 9–695 constitute a Myosin motor domain; that stretch reads FGKADFVLMD…TLFTLEELRA (687 aa). An ATP-binding site is contributed by 102–109; that stretch reads GESGAGKT. A Phosphoserine modification is found at Ser-200. Tyr-536 is modified (phosphotyrosine). Positions 572-594 are actin-binding; that stretch reads MIALVDNLASKEPYYVRCIKPND. IQ domains follow at residues 699-719 and 721-741; these read VRVV…MRYK and TKAA…SYIH. One can recognise a TH1 domain in the interval 812–1005; sequence GQRADLGLQR…RSGFILSVPG (194 aa).

It belongs to the TRAFAC class myosin-kinesin ATPase superfamily. Myosin family. In terms of assembly, interacts (via the two IQ motifs) with calmodulin. Binds an additional calmodulin chain via a third, C-terminal region. Interacts with F-actin. As to expression, detected in enterocytes at the intestinal brush border membrane. Detected at the tip of intestinal microvilli (at protein level).

The protein localises to the cytoplasm. It is found in the perikaryon. The protein resides in the cell projection. Its subcellular location is the dendrite. It localises to the early endosome. The protein localises to the cell cortex. It is found in the basolateral cell membrane. In terms of biological role, unconventional myosin that functions as actin-based motor protein with ATPase activity. Plays a role in endosomal protein trafficking, and especially in the transfer of cargo proteins from early to recycling endosomes. Required for normal planar cell polarity in ciliated tracheal cells, for normal rotational polarity of cilia, and for coordinated, unidirectional ciliary movement in the trachea. Required for normal, polarized cilia organization in brain ependymal epithelial cells. The chain is Unconventional myosin-Id from Mus musculus (Mouse).